Here is a 333-residue protein sequence, read N- to C-terminus: Gramillins biosynthetic cluster protein FGSG_00039 (333 aa).

It participates in mycotoxin biosynthesis. Part of the gene cluster that mediates the biosynthesis of gramillins A and B, bicyclic lipopeptides that induce cell death in maize leaves but not in wheat leaves. The nonribosomal peptide synthetase GRA1 incorporates respectively a glutamic adic (Glu), a leucine (Leu), a serine (Ser), a hydroxyglutamine (HOGln), a 2-amino decanoic acid, and 2 cysteins (CysB and CysA). The biosynthesis of 2-amino decanoic acid incorporated in gramillins could be initiated by a fatty acid synthase composed of the alpha and beta subunits FGSG_00036 and FGSG_11656. The cytochrome P450 monooxygenase FGSG_15680 could hydroxylate the fatty acid chain. Subsequent oxidation to the ketone by the oxidoreductase FGSG_00048 and transamination by aminotransferase FGSG_00049 could form 2-amino-decanoic acid. On the other hand, FGSG_15680 could also be responsible for the HO-modified glutamine at the gamma-position. Whether hydroxylation occurs on the fully assembled product or on the Gln residue prior to assembly into the gramillins requires further proof. The thioredoxin FGSG_00043 could also be required for the disulfide-bond formation between CysA and CysB. The specific involvement of the remaining proteins from the cluster is more difficult to discern, but could have broader regulatory (FGSG_00040 and FGSG_11657) or enzymatic functions (FGSG_00044 and FGSG_00045). The final C-domain of GRA1 does not possess the expected sequence of a termination CT domain, often implicated in macrocyclization and release of a cyclopeptidein fungal NRPs; and the thioesterase FGSG_00047 may act in concert with the terminal C-domain of GRA1 to catalyze the formation of the macrocyclic anhydride and release of the products. The chain is Gramillins biosynthetic cluster protein FGSG_00039 from Gibberella zeae (strain ATCC MYA-4620 / CBS 123657 / FGSC 9075 / NRRL 31084 / PH-1) (Wheat head blight fungus).